A 102-amino-acid chain; its full sequence is N(4)-acetylcytidine amidohydrolase (102 aa).

The 87-residue stretch at Thr6–Asp92 folds into the ASCH domain. Lys20 serves as the catalytic Proton acceptor. Catalysis depends on Thr23, which acts as the Nucleophile. The Proton donor role is filled by Glu73.

Belongs to the N(4)-acetylcytidine amidohydrolase family.

The catalysed reaction is N(4)-acetylcytidine + H2O = cytidine + acetate + H(+). It carries out the reaction N(4)-acetyl-2'-deoxycytidine + H2O = 2'-deoxycytidine + acetate + H(+). The enzyme catalyses N(4)-acetylcytosine + H2O = cytosine + acetate + H(+). Catalyzes the hydrolysis of N(4)-acetylcytidine (ac4C). This chain is N(4)-acetylcytidine amidohydrolase, found in Yersinia pseudotuberculosis serotype O:1b (strain IP 31758).